Here is a 367-residue protein sequence, read N- to C-terminus: Glutamate 5-kinase (367 aa).

Lysine 9 is a binding site for ATP. 3 residues coordinate substrate: serine 49, aspartate 136, and asparagine 148. ATP is bound by residues threonine 168–aspartate 169 and threonine 210–lysine 216. The PUA domain occupies serine 276–arginine 350.

The protein belongs to the glutamate 5-kinase family.

Its subcellular location is the cytoplasm. The catalysed reaction is L-glutamate + ATP = L-glutamyl 5-phosphate + ADP. It participates in amino-acid biosynthesis; L-proline biosynthesis; L-glutamate 5-semialdehyde from L-glutamate: step 1/2. Its function is as follows. Catalyzes the transfer of a phosphate group to glutamate to form L-glutamate 5-phosphate. This chain is Glutamate 5-kinase, found in Bacillus cereus (strain ZK / E33L).